The primary structure comprises 690 residues: Dual specificity protein kinase lkh1 (690 aa).

A disordered region spans residues 39 to 70 (PNLPPPFSVHQLQSFVPPQPPSSSSPSTTGTV). The Protein kinase domain maps to 362 to 682 (YTVVRLLGHG…AKEALWHPFF (321 aa)). Residues 368–376 (LGHGTFGKV) and K391 each bind ATP. Residue D488 is the Proton acceptor of the active site.

Belongs to the protein kinase superfamily. CMGC Ser/Thr protein kinase family. Lammer subfamily. Post-translationally, autophosphorylates on all three types of residues.

The catalysed reaction is L-seryl-[protein] + ATP = O-phospho-L-seryl-[protein] + ADP + H(+). It carries out the reaction L-threonyl-[protein] + ATP = O-phospho-L-threonyl-[protein] + ADP + H(+). It catalyses the reaction L-tyrosyl-[protein] + ATP = O-phospho-L-tyrosyl-[protein] + ADP + H(+). Protein kinase that may act as a negative regulator of filamentous growth and flocculation. Appears to have a role in normal cell wall and septum formation and in cell separation. May have antagonistic function in the regulation of beta-glucan distribution between the sites for cell wall and septum assembly. This chain is Dual specificity protein kinase lkh1 (lkh1), found in Schizosaccharomyces pombe (strain 972 / ATCC 24843) (Fission yeast).